The chain runs to 405 residues: Amino sugar nitrososynthase DnmZ (405 aa).

Residues glutamate 117 and arginine 332 each coordinate dTDP.

The protein belongs to the acyl-CoA dehydrogenase family. As to quaternary structure, homotetramer. Requires FAD as cofactor.

The protein operates within antibiotic biosynthesis. Functionally, nitrososynthase involved in the biosynthesis of baumycin. Catalyzes the double-oxidation of TDP-L-epi-vancosamine to TDP-L-epi-vancosonitrose. The rapid turnover of TDP-L-epi-vancosamine suggests that this compound, or a closely related analog, is the natural substrate for DnmZ. Can also catalyze the double-oxidation of TDP-L-evernosamine to TDP-L-evernitrosose. The protein is Amino sugar nitrososynthase DnmZ of Streptomyces peucetius.